Reading from the N-terminus, the 447-residue chain is NADP-specific glutamate dehydrogenase (447 aa).

Residues K92, Q113, and K116 each coordinate substrate. Residue K128 is the Proton donor of the active site. G167 lines the substrate pocket. Residues T211 and N242 each contribute to the NADP(+) site. S380 is a substrate binding site.

The protein belongs to the Glu/Leu/Phe/Val dehydrogenases family. As to quaternary structure, homohexamer.

The catalysed reaction is L-glutamate + NADP(+) + H2O = 2-oxoglutarate + NH4(+) + NADPH + H(+). Functionally, catalyzes the reversible oxidative deamination of glutamate to alpha-ketoglutarate and ammonia. In Salmonella typhi, this protein is NADP-specific glutamate dehydrogenase (gdhA).